A 214-amino-acid polypeptide reads, in one-letter code: Outer-membrane lipoprotein LolB (214 aa).

Residues 1–25 form the signal peptide; sequence MNNLKRFTKSIFSCIALSGLLFLGG. Cys26 carries N-palmitoyl cysteine lipidation. Cys26 carries the S-diacylglycerol cysteine lipid modification.

It belongs to the LolB family. In terms of assembly, monomer.

The protein resides in the cell outer membrane. Plays a critical role in the incorporation of lipoproteins in the outer membrane after they are released by the LolA protein. The chain is Outer-membrane lipoprotein LolB from Shewanella oneidensis (strain ATCC 700550 / JCM 31522 / CIP 106686 / LMG 19005 / NCIMB 14063 / MR-1).